The following is a 139-amino-acid chain: Nuclear transcription factor Y subunit B-4 (139 aa).

Residues Leu-8–Gly-14 mediate DNA binding. A subunit association domain (SAD) region spans residues Val-35–Val-46. The span at Tyr-90–Thr-115 shows a compositional bias: basic and acidic residues. The disordered stretch occupies residues Tyr-90 to Arg-139. A compositionally biased stretch (polar residues) spans Arg-116–Lys-125.

The protein belongs to the NFYB/HAP3 subunit family. In terms of assembly, heterotrimeric transcription factor composed of three components, NF-YA, NF-YB and NF-YC. NF-YB and NF-YC must interact and dimerize for NF-YA association and DNA binding. As to expression, expressed in flowers, siliques and young rosettes.

The protein resides in the nucleus. Functionally, component of the NF-Y/HAP transcription factor complex. The NF-Y complex stimulates the transcription of various genes by recognizing and binding to a CCAAT motif in promoters. The protein is Nuclear transcription factor Y subunit B-4 (NFYB4) of Arabidopsis thaliana (Mouse-ear cress).